Consider the following 273-residue polypeptide: 4-hydroxy-tetrahydrodipicolinate reductase (273 aa).

Residues 12–17 (GAGGRM) and Glu-38 contribute to the NAD(+) site. An NADP(+)-binding site is contributed by Arg-39. Residues 102–104 (GTT) and 126–129 (AANF) each bind NAD(+). Catalysis depends on His-159, which acts as the Proton donor/acceptor. A (S)-2,3,4,5-tetrahydrodipicolinate-binding site is contributed by His-160. Lys-163 functions as the Proton donor in the catalytic mechanism. 169-170 (GT) provides a ligand contact to (S)-2,3,4,5-tetrahydrodipicolinate.

The protein belongs to the DapB family. In terms of assembly, homotetramer.

The protein localises to the cytoplasm. The enzyme catalyses (S)-2,3,4,5-tetrahydrodipicolinate + NAD(+) + H2O = (2S,4S)-4-hydroxy-2,3,4,5-tetrahydrodipicolinate + NADH + H(+). The catalysed reaction is (S)-2,3,4,5-tetrahydrodipicolinate + NADP(+) + H2O = (2S,4S)-4-hydroxy-2,3,4,5-tetrahydrodipicolinate + NADPH + H(+). Its pathway is amino-acid biosynthesis; L-lysine biosynthesis via DAP pathway; (S)-tetrahydrodipicolinate from L-aspartate: step 4/4. Functionally, catalyzes the conversion of 4-hydroxy-tetrahydrodipicolinate (HTPA) to tetrahydrodipicolinate. The polypeptide is 4-hydroxy-tetrahydrodipicolinate reductase (Salmonella choleraesuis (strain SC-B67)).